Consider the following 386-residue polypeptide: Histidinol-phosphate aminotransferase (386 aa).

Residues 1 to 11 (MMVRKSTASNR) are compositionally biased toward polar residues. The tract at residues 1 to 22 (MMVRKSTASNRRLQDKGDEEPV) is disordered. Lys-248 carries the N6-(pyridoxal phosphate)lysine modification.

The protein belongs to the class-II pyridoxal-phosphate-dependent aminotransferase family. Histidinol-phosphate aminotransferase subfamily. Homodimer. Pyridoxal 5'-phosphate serves as cofactor.

The catalysed reaction is L-histidinol phosphate + 2-oxoglutarate = 3-(imidazol-4-yl)-2-oxopropyl phosphate + L-glutamate. It participates in amino-acid biosynthesis; L-histidine biosynthesis; L-histidine from 5-phospho-alpha-D-ribose 1-diphosphate: step 7/9. In Moorella thermoacetica (strain ATCC 39073 / JCM 9320), this protein is Histidinol-phosphate aminotransferase.